Reading from the N-terminus, the 133-residue chain is Large ribosomal subunit protein uL15 (133 aa).

The disordered stretch occupies residues 1–64 (MGLENLKPAK…QPLQRRLPKI (64 aa)).

The protein belongs to the universal ribosomal protein uL15 family. In terms of assembly, part of the 50S ribosomal subunit.

In terms of biological role, binds to the 23S rRNA. In Helicobacter pylori (strain Shi470), this protein is Large ribosomal subunit protein uL15.